Consider the following 311-residue polypeptide: MKPRKVMIIGAGNVGTAAAHAFVNQKFVEELILVDLNKERVEGNRKDLADAAAFMPGKMDITVRDASDCADVDIAVITVTAGPLKEGQTRLDELRSTSRIVSSIVPEMMKGGFNGIFLIATNPCDIITYQVWKLSGLPRERVLGTGVWLDTTRLRRLLAEKLDIAAQSIDAFILGEHGDSQFPVWSHSSIYGKPVNEYSVEKLGEALDLKQIGETARDTGFEIYHQKGCTEYGIGGTIVEICRHIFSGSQRALTVSCVLDGEYGESGLAIGVPAVLSQNGVKEIISLKLDEKEKEAFANSVAVIKKSIQSI.

NAD(+) is bound by residues Val-14, Asp-35, and Arg-40. Substrate is bound at residue Arg-90. Residues Ser-103, 120–122, and Thr-145 contribute to the NAD(+) site; that span reads ATN. 122 to 125 contacts substrate; sequence NPCD. 150 to 153 contributes to the substrate binding site; sequence DTTR. Catalysis depends on His-177, which acts as the Proton acceptor. A substrate-binding site is contributed by Thr-230.

It belongs to the LDH/MDH superfamily. LDH family. In terms of assembly, homotetramer.

Its subcellular location is the cytoplasm. The catalysed reaction is (S)-lactate + NAD(+) = pyruvate + NADH + H(+). It functions in the pathway fermentation; pyruvate fermentation to lactate; (S)-lactate from pyruvate: step 1/1. Functionally, catalyzes the conversion of lactate to pyruvate. The protein is L-lactate dehydrogenase 2 of Listeria monocytogenes serotype 4b (strain F2365).